A 313-amino-acid polypeptide reads, in one-letter code: Metal ABC transporter substrate-binding lipoprotein (313 aa).

A signal peptide spans methionine 1–glycine 23. The N-palmitoyl cysteine moiety is linked to residue cysteine 24. The S-diacylglycerol cysteine moiety is linked to residue cysteine 24. 4 residues coordinate Zn(2+): histidine 71, histidine 143, glutamate 209, and aspartate 284.

Belongs to the bacterial solute-binding protein 9 family. Lipoprotein receptor antigen (Lrai) subfamily.

It is found in the cell membrane. Its function is as follows. Part of an ATP-driven transport system for a metal; probably for manganese. The chain is Metal ABC transporter substrate-binding lipoprotein (mtsA) from Lactococcus lactis subsp. lactis (strain IL1403) (Streptococcus lactis).